A 1184-amino-acid chain; its full sequence is uncharacterized protein (1184 aa).

2 disordered regions span residues 115 to 152 and 397 to 426; these read ETSS…AHVS and TYKP…VPER. Polar residues-rich tracts occupy residues 137-152 and 397-421; these read HVMN…AHVS and TYKP…TSHN. Phosphoserine is present on Ser686. 4 stretches are compositionally biased toward basic and acidic residues: residues 705–767, 783–792, 849–863, and 891–902; these read LSER…ESAH, FEHETEPSHY, SHAH…RDLG, and YLHDEKTRDTLT. Disordered regions lie at residues 705 to 870 and 890 to 1017; these read LSER…FGDV and DYLH…SSPK. Ser905 carries the post-translational modification Phosphoserine. Residues 920–932 show a composition bias toward basic and acidic residues; that stretch reads EDHPHASEAERAH. Low complexity predominate over residues 941–950; that stretch reads SSESSPESQS. The segment covering 999-1011 has biased composition (basic and acidic residues); the sequence is PRERLDDNAKEIL. Ser1018 is modified (phosphoserine). 2 disordered regions span residues 1029 to 1107 and 1135 to 1154; these read NRKD…IGTQ and DVDN…KSRP. Residues 1032–1045 show a composition bias toward basic and acidic residues; it reads DKAAVKRMLEEDSS. Over residues 1073-1107 the composition is skewed to polar residues; sequence PAVNNSTKPVAVTSKNGHSRNGSHAAHSNNVIGTQ. Residues 1138-1150 show a composition bias toward low complexity; the sequence is NVVSGHSNVNGVS.

It is found in the cytoplasm. This is an uncharacterized protein from Schizosaccharomyces pombe (strain 972 / ATCC 24843) (Fission yeast).